The sequence spans 325 residues: tRNA uridine(34) hydroxylase (325 aa).

Residues Glu122–Trp218 enclose the Rhodanese domain. Residue Cys178 is the Cysteine persulfide intermediate of the active site.

Belongs to the TrhO family.

It carries out the reaction uridine(34) in tRNA + AH2 + O2 = 5-hydroxyuridine(34) in tRNA + A + H2O. Catalyzes oxygen-dependent 5-hydroxyuridine (ho5U) modification at position 34 in tRNAs. The polypeptide is tRNA uridine(34) hydroxylase (Chlamydia felis (strain Fe/C-56) (Chlamydophila felis)).